We begin with the raw amino-acid sequence, 450 residues long: NADP-specific glutamate dehydrogenase (450 aa).

The active site involves K114.

The protein belongs to the Glu/Leu/Phe/Val dehydrogenases family. In terms of assembly, homohexamer.

The catalysed reaction is L-glutamate + NADP(+) + H2O = 2-oxoglutarate + NH4(+) + NADPH + H(+). The chain is NADP-specific glutamate dehydrogenase (gdhA) from Botryotinia fuckeliana (Noble rot fungus).